Here is a 229-residue protein sequence, read N- to C-terminus: Histone H1 (229 aa).

2 disordered regions span residues 1-52 (MADT…SSHP) and 125-229 (APAL…RTRK). Basic residues predominate over residues 32 to 45 (KEKKKVIAAKKPKS). An H15 domain is found at 50–119 (SHPSFFEMIS…KVKNSFKLPS (70 aa)). Over residues 125–138 (APALAKKPTIPKPK) the composition is skewed to low complexity. The span at 139 to 160 (VAAKPKTAKIGAKPKAKAKVAA) shows a compositional bias: basic residues. Composition is skewed to low complexity over residues 161 to 177 (KTKATTKTVAKKIPAAK) and 185 to 205 (KPKTVAAKPAKVAKTAAVASP). Residues 206–229 (GKKKAVPVKKVKTVKSPAGKRTRK) are compositionally biased toward basic residues.

Belongs to the histone H1/H5 family.

It localises to the nucleus. It is found in the chromosome. Histones H1 are necessary for the condensation of nucleosome chains into higher-order structures. The chain is Histone H1 from Euphorbia esula (Leafy spurge).